A 191-amino-acid polypeptide reads, in one-letter code: Ribosome maturation factor RimM (191 aa).

The 78-residue stretch at 107–184 folds into the PRC barrel domain; that stretch reads EDDEWHQDDL…LVLVSPPPGL (78 aa).

The protein belongs to the RimM family. Binds ribosomal protein uS19.

It is found in the cytoplasm. Its function is as follows. An accessory protein needed during the final step in the assembly of 30S ribosomal subunit, possibly for assembly of the head region. Essential for efficient processing of 16S rRNA. May be needed both before and after RbfA during the maturation of 16S rRNA. It has affinity for free ribosomal 30S subunits but not for 70S ribosomes. The chain is Ribosome maturation factor RimM from Kocuria rhizophila (strain ATCC 9341 / DSM 348 / NBRC 103217 / DC2201).